A 592-amino-acid chain; its full sequence is Aspartate--tRNA(Asp/Asn) ligase (592 aa).

Residue E177 participates in L-aspartate binding. Residues 201–204 (QIFK) are aspartate. Positions 223 and 452 each coordinate L-aspartate. 223–225 (RDE) contributes to the ATP binding site. Residue E486 participates in ATP binding. R493 lines the L-aspartate pocket. 538–541 (GIDR) serves as a coordination point for ATP.

The protein belongs to the class-II aminoacyl-tRNA synthetase family. Type 1 subfamily. In terms of assembly, homodimer.

It is found in the cytoplasm. The catalysed reaction is tRNA(Asx) + L-aspartate + ATP = L-aspartyl-tRNA(Asx) + AMP + diphosphate. Aspartyl-tRNA synthetase with relaxed tRNA specificity since it is able to aspartylate not only its cognate tRNA(Asp) but also tRNA(Asn). Reaction proceeds in two steps: L-aspartate is first activated by ATP to form Asp-AMP and then transferred to the acceptor end of tRNA(Asp/Asn). The polypeptide is Aspartate--tRNA(Asp/Asn) ligase (Anaplasma marginale (strain Florida)).